The chain runs to 135 residues: Holo-[acyl-carrier-protein] synthase (135 aa).

Mg(2+) is bound by residues aspartate 8 and glutamate 57.

It belongs to the P-Pant transferase superfamily. AcpS family. Mg(2+) serves as cofactor.

It is found in the cytoplasm. It catalyses the reaction apo-[ACP] + CoA = holo-[ACP] + adenosine 3',5'-bisphosphate + H(+). Transfers the 4'-phosphopantetheine moiety from coenzyme A to a Ser of acyl-carrier-protein. The sequence is that of Holo-[acyl-carrier-protein] synthase from Xanthobacter autotrophicus (strain ATCC BAA-1158 / Py2).